Here is a 508-residue protein sequence, read N- to C-terminus: Photosystem II CP47 reaction center protein (508 aa).

6 consecutive transmembrane segments (helical) span residues 21 to 36, 101 to 115, 140 to 156, 203 to 218, 237 to 252, and 457 to 472; these read SVHLMHTALVSGWAGS, IVLSGLLFLAAIWHW, GIHLFLSGVLCFGFGAF, IAAGILGILAGLFHLS, VLSSSIAAVFFAAFVV, and TFALIFFFGHIWHGAR.

This sequence belongs to the PsbB/PsbC family. PsbB subfamily. In terms of assembly, PSII is composed of 1 copy each of membrane proteins PsbA, PsbB, PsbC, PsbD, PsbE, PsbF, PsbH, PsbI, PsbJ, PsbK, PsbL, PsbM, PsbT, PsbX, PsbY, PsbZ, Psb30/Ycf12, at least 3 peripheral proteins of the oxygen-evolving complex and a large number of cofactors. It forms dimeric complexes. It depends on Binds multiple chlorophylls. PSII binds additional chlorophylls, carotenoids and specific lipids. as a cofactor.

It is found in the plastid. The protein localises to the chloroplast thylakoid membrane. One of the components of the core complex of photosystem II (PSII). It binds chlorophyll and helps catalyze the primary light-induced photochemical processes of PSII. PSII is a light-driven water:plastoquinone oxidoreductase, using light energy to abstract electrons from H(2)O, generating O(2) and a proton gradient subsequently used for ATP formation. The polypeptide is Photosystem II CP47 reaction center protein (Angiopteris evecta (Mule's foot fern)).